We begin with the raw amino-acid sequence, 210 residues long: Large ribosomal subunit protein uL4 (210 aa).

The interval 44 to 79 (QHQGTHKVKTRSEVSGGGRKPYRQKGTGNARRGSSR) is disordered.

The protein belongs to the universal ribosomal protein uL4 family. As to quaternary structure, part of the 50S ribosomal subunit.

One of the primary rRNA binding proteins, this protein initially binds near the 5'-end of the 23S rRNA. It is important during the early stages of 50S assembly. It makes multiple contacts with different domains of the 23S rRNA in the assembled 50S subunit and ribosome. Functionally, forms part of the polypeptide exit tunnel. In Chloroherpeton thalassium (strain ATCC 35110 / GB-78), this protein is Large ribosomal subunit protein uL4.